Consider the following 188-residue polypeptide: dCTP deaminase (188 aa).

DCTP is bound by residues 111–116 (KSTYAR), 135–137 (TLE), Q156, Y170, and Q180. E137 acts as the Proton donor/acceptor in catalysis.

The protein belongs to the dCTP deaminase family. Homotrimer.

The enzyme catalyses dCTP + H2O + H(+) = dUTP + NH4(+). Its pathway is pyrimidine metabolism; dUMP biosynthesis; dUMP from dCTP (dUTP route): step 1/2. Its function is as follows. Catalyzes the deamination of dCTP to dUTP. This Neisseria gonorrhoeae (strain ATCC 700825 / FA 1090) protein is dCTP deaminase.